A 158-amino-acid chain; its full sequence is Cyclic pyranopterin monophosphate synthase (158 aa).

Substrate is bound by residues 74-76 and 112-113; these read MCH and ME. Aspartate 127 is an active-site residue.

The protein belongs to the MoaC family. In terms of assembly, homohexamer; trimer of dimers.

It catalyses the reaction (8S)-3',8-cyclo-7,8-dihydroguanosine 5'-triphosphate = cyclic pyranopterin phosphate + diphosphate. It participates in cofactor biosynthesis; molybdopterin biosynthesis. Catalyzes the conversion of (8S)-3',8-cyclo-7,8-dihydroguanosine 5'-triphosphate to cyclic pyranopterin monophosphate (cPMP). The sequence is that of Cyclic pyranopterin monophosphate synthase from Thermoanaerobacter pseudethanolicus (strain ATCC 33223 / 39E) (Clostridium thermohydrosulfuricum).